A 301-amino-acid chain; its full sequence is Lipoyl synthase (301 aa).

Positions 37, 42, 48, 63, 67, 70, and 276 each coordinate [4Fe-4S] cluster. The region spanning 49-265 (WSKKHATVMI…ERIARTKGFL (217 aa)) is the Radical SAM core domain.

Belongs to the radical SAM superfamily. Lipoyl synthase family. It depends on [4Fe-4S] cluster as a cofactor.

It is found in the cytoplasm. It carries out the reaction [[Fe-S] cluster scaffold protein carrying a second [4Fe-4S](2+) cluster] + N(6)-octanoyl-L-lysyl-[protein] + 2 oxidized [2Fe-2S]-[ferredoxin] + 2 S-adenosyl-L-methionine + 4 H(+) = [[Fe-S] cluster scaffold protein] + N(6)-[(R)-dihydrolipoyl]-L-lysyl-[protein] + 4 Fe(3+) + 2 hydrogen sulfide + 2 5'-deoxyadenosine + 2 L-methionine + 2 reduced [2Fe-2S]-[ferredoxin]. Its pathway is protein modification; protein lipoylation via endogenous pathway; protein N(6)-(lipoyl)lysine from octanoyl-[acyl-carrier-protein]: step 2/2. In terms of biological role, catalyzes the radical-mediated insertion of two sulfur atoms into the C-6 and C-8 positions of the octanoyl moiety bound to the lipoyl domains of lipoate-dependent enzymes, thereby converting the octanoylated domains into lipoylated derivatives. The chain is Lipoyl synthase from Rickettsia felis (strain ATCC VR-1525 / URRWXCal2) (Rickettsia azadi).